A 411-amino-acid chain; its full sequence is Exodeoxyribonuclease 7 large subunit (411 aa).

Belongs to the XseA family. In terms of assembly, heterooligomer composed of large and small subunits.

The protein resides in the cytoplasm. It carries out the reaction Exonucleolytic cleavage in either 5'- to 3'- or 3'- to 5'-direction to yield nucleoside 5'-phosphates.. Its function is as follows. Bidirectionally degrades single-stranded DNA into large acid-insoluble oligonucleotides, which are then degraded further into small acid-soluble oligonucleotides. In Mycobacterium sp. (strain KMS), this protein is Exodeoxyribonuclease 7 large subunit.